The following is a 441-amino-acid chain: Glutamate-1-semialdehyde 2,1-aminomutase (441 aa).

N6-(pyridoxal phosphate)lysine is present on lysine 273.

This sequence belongs to the class-III pyridoxal-phosphate-dependent aminotransferase family. HemL subfamily. Requires pyridoxal 5'-phosphate as cofactor.

It is found in the cytoplasm. The catalysed reaction is (S)-4-amino-5-oxopentanoate = 5-aminolevulinate. It participates in porphyrin-containing compound metabolism; protoporphyrin-IX biosynthesis; 5-aminolevulinate from L-glutamyl-tRNA(Glu): step 2/2. This Pyrobaculum calidifontis (strain DSM 21063 / JCM 11548 / VA1) protein is Glutamate-1-semialdehyde 2,1-aminomutase.